A 423-amino-acid polypeptide reads, in one-letter code: Histidine--tRNA ligase (423 aa).

Belongs to the class-II aminoacyl-tRNA synthetase family. As to quaternary structure, homodimer.

Its subcellular location is the cytoplasm. It catalyses the reaction tRNA(His) + L-histidine + ATP = L-histidyl-tRNA(His) + AMP + diphosphate + H(+). The chain is Histidine--tRNA ligase (hisS) from Haemophilus influenzae (strain ATCC 51907 / DSM 11121 / KW20 / Rd).